The following is a 217-amino-acid chain: Probable transaldolase (217 aa).

The active-site Schiff-base intermediate with substrate is K83.

This sequence belongs to the transaldolase family. Type 3B subfamily.

Its subcellular location is the cytoplasm. The catalysed reaction is D-sedoheptulose 7-phosphate + D-glyceraldehyde 3-phosphate = D-erythrose 4-phosphate + beta-D-fructose 6-phosphate. The protein operates within carbohydrate degradation; pentose phosphate pathway; D-glyceraldehyde 3-phosphate and beta-D-fructose 6-phosphate from D-ribose 5-phosphate and D-xylulose 5-phosphate (non-oxidative stage): step 2/3. Its function is as follows. Transaldolase is important for the balance of metabolites in the pentose-phosphate pathway. The polypeptide is Probable transaldolase (Maricaulis maris (strain MCS10) (Caulobacter maris)).